The chain runs to 273 residues: Probable branched-chain-amino-acid aminotransferase (273 aa).

Lysine 133 is subject to N6-(pyridoxal phosphate)lysine.

This sequence belongs to the class-IV pyridoxal-phosphate-dependent aminotransferase family. It depends on pyridoxal 5'-phosphate as a cofactor.

It carries out the reaction L-leucine + 2-oxoglutarate = 4-methyl-2-oxopentanoate + L-glutamate. It catalyses the reaction L-isoleucine + 2-oxoglutarate = (S)-3-methyl-2-oxopentanoate + L-glutamate. The catalysed reaction is L-valine + 2-oxoglutarate = 3-methyl-2-oxobutanoate + L-glutamate. It functions in the pathway amino-acid biosynthesis; L-isoleucine biosynthesis; L-isoleucine from 2-oxobutanoate: step 4/4. The protein operates within amino-acid biosynthesis; L-leucine biosynthesis; L-leucine from 3-methyl-2-oxobutanoate: step 4/4. It participates in amino-acid biosynthesis; L-valine biosynthesis; L-valine from pyruvate: step 4/4. Its function is as follows. Acts on leucine, isoleucine and valine. The chain is Probable branched-chain-amino-acid aminotransferase (ilvE) from Thermotoga maritima (strain ATCC 43589 / DSM 3109 / JCM 10099 / NBRC 100826 / MSB8).